A 254-amino-acid chain; its full sequence is Leucyl/phenylalanyl-tRNA--protein transferase (254 aa).

Residues 1-10 show a composition bias toward pro residues; sequence MSSQPPPLPW. Positions 1–28 are disordered; it reads MSSQPPPLPWLDPNQDFPPTSQAWDENS.

Belongs to the L/F-transferase family.

It is found in the cytoplasm. The catalysed reaction is N-terminal L-lysyl-[protein] + L-leucyl-tRNA(Leu) = N-terminal L-leucyl-L-lysyl-[protein] + tRNA(Leu) + H(+). It carries out the reaction N-terminal L-arginyl-[protein] + L-leucyl-tRNA(Leu) = N-terminal L-leucyl-L-arginyl-[protein] + tRNA(Leu) + H(+). It catalyses the reaction L-phenylalanyl-tRNA(Phe) + an N-terminal L-alpha-aminoacyl-[protein] = an N-terminal L-phenylalanyl-L-alpha-aminoacyl-[protein] + tRNA(Phe). In terms of biological role, functions in the N-end rule pathway of protein degradation where it conjugates Leu, Phe and, less efficiently, Met from aminoacyl-tRNAs to the N-termini of proteins containing an N-terminal arginine or lysine. The protein is Leucyl/phenylalanyl-tRNA--protein transferase of Albidiferax ferrireducens (strain ATCC BAA-621 / DSM 15236 / T118) (Rhodoferax ferrireducens).